A 315-amino-acid polypeptide reads, in one-letter code: Phosphatidylglycerol--prolipoprotein diacylglyceryl transferase (315 aa).

2 helical membrane passes run 19–39 (FTIHMYAICILIGICVAVWIL) and 93–113 (VWEGGMAIFGGISVGTLVAFL). A 1,2-diacyl-sn-glycero-3-phospho-(1'-sn-glycerol) is bound at residue Arg-141. 2 helical membrane passes run 188–208 (LFHPTFLYEMIWNLIGAALII) and 256–276 (VWTAIIVFVLGCILFVVLYQY).

The protein belongs to the Lgt family.

The protein localises to the cell membrane. The enzyme catalyses L-cysteinyl-[prolipoprotein] + a 1,2-diacyl-sn-glycero-3-phospho-(1'-sn-glycerol) = an S-1,2-diacyl-sn-glyceryl-L-cysteinyl-[prolipoprotein] + sn-glycerol 1-phosphate + H(+). It functions in the pathway protein modification; lipoprotein biosynthesis (diacylglyceryl transfer). Its function is as follows. Catalyzes the transfer of the diacylglyceryl group from phosphatidylglycerol to the sulfhydryl group of the N-terminal cysteine of a prolipoprotein, the first step in the formation of mature lipoproteins. The sequence is that of Phosphatidylglycerol--prolipoprotein diacylglyceryl transferase from Bifidobacterium longum (strain NCC 2705).